Consider the following 89-residue polypeptide: Small ribosomal subunit protein uS15 (89 aa).

It belongs to the universal ribosomal protein uS15 family. As to quaternary structure, part of the 30S ribosomal subunit. Forms a bridge to the 50S subunit in the 70S ribosome, contacting the 23S rRNA.

Its function is as follows. One of the primary rRNA binding proteins, it binds directly to 16S rRNA where it helps nucleate assembly of the platform of the 30S subunit by binding and bridging several RNA helices of the 16S rRNA. Functionally, forms an intersubunit bridge (bridge B4) with the 23S rRNA of the 50S subunit in the ribosome. This is Small ribosomal subunit protein uS15 from Frankia casuarinae (strain DSM 45818 / CECT 9043 / HFP020203 / CcI3).